Reading from the N-terminus, the 268-residue chain is Hydroxyethylthiazole kinase (268 aa).

M44 contacts substrate. Residues R119 and S165 each coordinate ATP. A substrate-binding site is contributed by G192.

The protein belongs to the Thz kinase family. Mg(2+) serves as cofactor.

The enzyme catalyses 5-(2-hydroxyethyl)-4-methylthiazole + ATP = 4-methyl-5-(2-phosphooxyethyl)-thiazole + ADP + H(+). It participates in cofactor biosynthesis; thiamine diphosphate biosynthesis; 4-methyl-5-(2-phosphoethyl)-thiazole from 5-(2-hydroxyethyl)-4-methylthiazole: step 1/1. Its function is as follows. Catalyzes the phosphorylation of the hydroxyl group of 4-methyl-5-beta-hydroxyethylthiazole (THZ). This chain is Hydroxyethylthiazole kinase, found in Corynebacterium glutamicum (strain R).